The following is a 382-amino-acid chain: Mating-type protein a-1 (382 aa).

Residues 116 to 184 (IPRPPNAYIL…RLLLENPDYR (69 aa)) constitute a DNA-binding region (HMG box).

In terms of assembly, binds in vitro to DNA containing a specific core sequence 5'-CTTTG-3'.

It is found in the nucleus. Functionally, mating type proteins are sequence specific DNA-binding proteins that act as master switches in yeast differentiation by controlling gene expression in a cell type-specific fashion. Transcriptional activator that induces the transcription of a-specific genes like mating factor mfa-1. Required for mating as an a-cell, blocking of heterokaryon formation (vegetative incompatibility) and for perithecium induction. This chain is Mating-type protein a-1 (mta-1), found in Neurospora crassa.